The following is a 201-amino-acid chain: Adenylyl-sulfate kinase (201 aa).

ATP is bound at residue 35 to 42; it reads GLSGSGKS. The active-site Phosphoserine intermediate is serine 109.

The protein belongs to the APS kinase family.

The enzyme catalyses adenosine 5'-phosphosulfate + ATP = 3'-phosphoadenylyl sulfate + ADP + H(+). It functions in the pathway sulfur metabolism; hydrogen sulfide biosynthesis; sulfite from sulfate: step 2/3. Catalyzes the synthesis of activated sulfate. This is Adenylyl-sulfate kinase from Shigella flexneri.